The sequence spans 120 residues: Large ribosomal subunit protein bL19 (120 aa).

Belongs to the bacterial ribosomal protein bL19 family.

Its function is as follows. This protein is located at the 30S-50S ribosomal subunit interface and may play a role in the structure and function of the aminoacyl-tRNA binding site. The chain is Large ribosomal subunit protein bL19 from Thermodesulfovibrio yellowstonii (strain ATCC 51303 / DSM 11347 / YP87).